We begin with the raw amino-acid sequence, 212 residues long: Uridine kinase (212 aa).

Residue 13-20 (GGSGSGKT) coordinates ATP.

The protein belongs to the uridine kinase family.

The protein localises to the cytoplasm. The enzyme catalyses uridine + ATP = UMP + ADP + H(+). The catalysed reaction is cytidine + ATP = CMP + ADP + H(+). Its pathway is pyrimidine metabolism; CTP biosynthesis via salvage pathway; CTP from cytidine: step 1/3. It functions in the pathway pyrimidine metabolism; UMP biosynthesis via salvage pathway; UMP from uridine: step 1/1. The protein is Uridine kinase of Bacillus cereus (strain ATCC 10987 / NRS 248).